The following is a 524-amino-acid chain: DEAD-box ATP-dependent RNA helicase CshA (524 aa).

The short motif at 1–29 is the Q motif element; it reads MKFNELNLSADLLAEIEKAGFVEASPIQE. Residues 32–202 enclose the Helicase ATP-binding domain; the sequence is IPLALEGKDV…VQFMKAPEHV (171 aa). 45-52 is a binding site for ATP; sequence AQTGTGKT. A DEAD box motif is present at residues 150–153; the sequence is DEAD. The Helicase C-terminal domain maps to 213 to 373; the sequence is LVDQYYIRVK…GLKPASVEES (161 aa). Residues 440 to 524 form a disordered region; sequence EKPLPFKPSG…GFVIRNKGDK (85 aa). Residues 463-498 show a composition bias toward basic and acidic residues; the sequence is RRGDDRRERDRRGNGRRDEFKKGSRGNDRFDKEKRY.

Belongs to the DEAD box helicase family. CshA subfamily. Oligomerizes, may be a member of the RNA degradosome.

Its subcellular location is the cytoplasm. The enzyme catalyses ATP + H2O = ADP + phosphate + H(+). DEAD-box RNA helicase possibly involved in RNA degradation. Unwinds dsRNA in both 5'- and 3'-directions, has RNA-dependent ATPase activity. The protein is DEAD-box ATP-dependent RNA helicase CshA of Streptococcus pneumoniae serotype 4 (strain ATCC BAA-334 / TIGR4).